We begin with the raw amino-acid sequence, 167 residues long: Large ribosomal subunit protein uL15 (167 aa).

Polar residues predominate over residues 1–10 (MKLNQISDNP). The disordered stretch occupies residues 1–37 (MKLNQISDNPGATKDRMRVGRGIGSGKGKTAGRGVKG). Residues 21 to 35 (RGIGSGKGKTAGRGV) are compositionally biased toward gly residues.

Belongs to the universal ribosomal protein uL15 family. As to quaternary structure, part of the 50S ribosomal subunit.

Binds to the 23S rRNA. In Methylobacterium radiotolerans (strain ATCC 27329 / DSM 1819 / JCM 2831 / NBRC 15690 / NCIMB 10815 / 0-1), this protein is Large ribosomal subunit protein uL15.